The sequence spans 133 residues: Small ribosomal subunit protein uS8 (133 aa).

This sequence belongs to the universal ribosomal protein uS8 family. As to quaternary structure, part of the 30S ribosomal subunit. Contacts proteins S5 and S12.

Functionally, one of the primary rRNA binding proteins, it binds directly to 16S rRNA central domain where it helps coordinate assembly of the platform of the 30S subunit. The sequence is that of Small ribosomal subunit protein uS8 from Trichodesmium erythraeum (strain IMS101).